We begin with the raw amino-acid sequence, 237 residues long: CD99 antigen-like protein 2 (237 aa).

An N-terminal signal peptide occupies residues Met-1 to Gly-25. Residues Asp-26–Gly-161 are Extracellular-facing. The segment at Asp-47–Ser-157 is disordered. Low complexity-rich tracts occupy residues Thr-51–Ala-66 and Thr-74–Arg-84. The span at Asp-102–Lys-111 shows a compositional bias: basic and acidic residues. O-linked (Xyl...) (chondroitin sulfate) serine glycosylation occurs at Ser-154. A helical membrane pass occupies residues Thr-162 to Ile-182. Topologically, residues Ser-183–Ile-237 are cytoplasmic. Over residues Thr-218–Ala-227 the composition is skewed to polar residues. A disordered region spans residues Thr-218–Ile-237. The span at Glu-228–Ile-237 shows a compositional bias: pro residues.

The protein belongs to the CD99 family. O-glycosylated. As to expression, highly expressed in the nervous system, including brain, dentate nucleus of hippocampus, granular and Purkinje cells of cerebellum, brain stem nucleus and choroid plexus. Expressed in peripheral blood T- and B-cells and neutrophils (at protein level). Almost undetectable in bone marrow-derived neutrophils (at protein level). Also expressed in thymocytes (at protein level) with higher expression in cortical thymocytes than in medullary thymocytes. Expressed at high levels in testis (mostly in germ cells and Sertoli cells) and ovary (mostly in granulosa cells). Expressed in lung, heart, kidney and liver (at protein level); however, expression in heart, kidney and liver seems restricted to endothelial cells (at protein level). Highly expressed in endothelial cells and to a lower level in vascular smooth muscle cells (at protein level). Low expression in spleen.

Its subcellular location is the cell membrane. The protein localises to the cell junction. It is found in the secreted. In terms of biological role, plays a role in a late step of leukocyte extravasation helping cells to overcome the endothelial basement membrane. Acts at the same site as, but independently of, PECAM1. Homophilic adhesion molecule, but these interactions may not be required for cell aggregation. The polypeptide is CD99 antigen-like protein 2 (Cd99l2) (Mus musculus (Mouse)).